Reading from the N-terminus, the 405-residue chain is MDDDDFGGFEAAETFDGGNGETQTTSPAIPWAAFPTVSGVHLSPPSPEIVLDHDHSSAIDCLSSDAIISSPENTHAENSIVSQTIPKAQIQQSTHTHLDISLFPLGLTDEKSNGTIALVDDSEDPGANVSNIQLRQKISSLEIKLKVSEEEKQRIKQDVESLMEKHNVLEKGFLKEKEQEAISFQDRYKELQEKHKQELEDMRKAGHEALSIIVDEYKHQRLLEMLDTEKELLKGKIKEALIQQSQEQKEILEKCLEEERQRNKEALVSAAKLEKEAMKDAVLKVVEEERKNSEKAHAEERELWKTEHAKDQEKVSQEIQKAIQEQRKISQETVKAAIIEEQKRSEKAVEEAVKRTRDELIEYIKEQKRLDQVIRQRSLSSLELFLSCAQKQLSALIATEPVDIE.

The tract at residues 1 to 16 is GGA1-binding motif; the sequence is MDDDDFGGFEAAETFD. A disordered region spans residues 1 to 27; it reads MDDDDFGGFEAAETFDGGNGETQTTSP. Phosphoserine is present on residues S43 and S46. Residues 126–376 adopt a coiled-coil conformation; it reads GANVSNIQLR…QKRLDQVIRQ (251 aa). Positions 210 to 377 are homodimerization; the sequence is LSIIVDEYKH…KRLDQVIRQR (168 aa).

As to quaternary structure, homodimer. Interacts with GGA1, GGA2 and AP1G1.

Its subcellular location is the membrane. It is found in the golgi apparatus. The protein localises to the trans-Golgi network membrane. The protein resides in the trans-Golgi network. Its function is as follows. Involved in the regulation of membrane traffic through the trans-Golgi network (TGN). Functions in close cooperation with the GGAs in the sorting of hydrolases to lysosomes. The sequence is that of Coiled-coil domain-containing protein 91 (CCDC91) from Pongo abelii (Sumatran orangutan).